Here is a 203-residue protein sequence, read N- to C-terminus: MSENDDLLVPLNDYLAAGVHIGTQQKTKDMEPFIYRTRADGLHVIDVRKTDERIRIAANFLSMYNTDEILVVSRRYYGQKPVSKFAEATGTTAIPGRFVPGTLTNPEYDGYLEPEVIVLTDPRADFQALVEAQSVGIPIVALCDTDNFTGNVDLAIPTNNKGRKALALVYWLLARELLKKLGRLEEDEEFEYDPEDFEGPPPR.

The protein belongs to the universal ribosomal protein uS2 family.

The protein is Small ribosomal subunit protein uS2 of Methanopyrus kandleri (strain AV19 / DSM 6324 / JCM 9639 / NBRC 100938).